Reading from the N-terminus, the 65-residue chain is Large ribosomal subunit protein uL29 (65 aa).

It belongs to the universal ribosomal protein uL29 family.

The polypeptide is Large ribosomal subunit protein uL29 (Acinetobacter baumannii (strain AB307-0294)).